Reading from the N-terminus, the 157-residue chain is Small ribosomal subunit protein uS7 (157 aa).

Belongs to the universal ribosomal protein uS7 family. Part of the 30S ribosomal subunit. Contacts proteins S9 and S11.

In terms of biological role, one of the primary rRNA binding proteins, it binds directly to 16S rRNA where it nucleates assembly of the head domain of the 30S subunit. Is located at the subunit interface close to the decoding center, probably blocks exit of the E-site tRNA. This Borreliella afzelii (strain PKo) (Borrelia afzelii) protein is Small ribosomal subunit protein uS7.